We begin with the raw amino-acid sequence, 663 residues long: uncharacterized protein (663 aa).

Residue 207-214 (GPPGTGKT) coordinates ATP.

This sequence belongs to the DNA2/NAM7 helicase family.

This is an uncharacterized protein from Methanocaldococcus jannaschii (strain ATCC 43067 / DSM 2661 / JAL-1 / JCM 10045 / NBRC 100440) (Methanococcus jannaschii).